Reading from the N-terminus, the 310-residue chain is Protein BIG GRAIN 1 (310 aa).

A disordered region spans residues 81-141 (RAPGPHATTS…KKAKKPGASI (61 aa)). The span at 90 to 106 (SSSSECSSYGGFSSSEA) shows a compositional bias: low complexity.

Belongs to the BIG GRAIN 1 (BG1) plant protein family.

It is found in the cell membrane. Its function is as follows. Involved in auxin transport. Positive regulator of the auxin signaling pathway involved in gravitropism, plant growth and grain development. This Oryza sativa subsp. indica (Rice) protein is Protein BIG GRAIN 1.